The following is a 130-amino-acid chain: Abscisic acid and environmental stress-inducible protein TAS14 (130 aa).

Residues 1–130 are disordered; it reads MAQYGNQDQM…KIKDKIPGMH (130 aa). Gly residues predominate over residues 27–58; the sequence is QGTGTGGMMGGTGTGGMMGGTGGEYGTQGMGT. Composition is skewed to basic and acidic residues over residues 61-73 and 92-130; these read HHHE…RRSD and KEKI…PGMH.

It belongs to the plant dehydrin family.

The sequence is that of Abscisic acid and environmental stress-inducible protein TAS14 (TAS14) from Solanum lycopersicum (Tomato).